The chain runs to 84 residues: ATP synthase subunit c (84 aa).

2 consecutive transmembrane segments (helical) span residues 10–30 (IAVA…FAIL) and 53–73 (FIVA…ALFF).

It belongs to the ATPase C chain family. As to quaternary structure, F-type ATPases have 2 components, F(1) - the catalytic core - and F(0) - the membrane proton channel. F(1) has five subunits: alpha(3), beta(3), gamma(1), delta(1), epsilon(1). F(0) has three main subunits: a(1), b(2) and c(10-14). The alpha and beta chains form an alternating ring which encloses part of the gamma chain. F(1) is attached to F(0) by a central stalk formed by the gamma and epsilon chains, while a peripheral stalk is formed by the delta and b chains.

It localises to the cell inner membrane. Its function is as follows. F(1)F(0) ATP synthase produces ATP from ADP in the presence of a proton or sodium gradient. F-type ATPases consist of two structural domains, F(1) containing the extramembraneous catalytic core and F(0) containing the membrane proton channel, linked together by a central stalk and a peripheral stalk. During catalysis, ATP synthesis in the catalytic domain of F(1) is coupled via a rotary mechanism of the central stalk subunits to proton translocation. Key component of the F(0) channel; it plays a direct role in translocation across the membrane. A homomeric c-ring of between 10-14 subunits forms the central stalk rotor element with the F(1) delta and epsilon subunits. In Shewanella putrefaciens (strain CN-32 / ATCC BAA-453), this protein is ATP synthase subunit c.